The sequence spans 422 residues: Ribonuclease Y (422 aa).

Positions 112-172 (TTNIVKLPSD…IRREIATRTL (61 aa)) constitute a KH domain. In terms of domain architecture, HD spans 238–331 (VLAHSIEVAK…VAIADSISAS (94 aa)).

The protein belongs to the RNase Y family.

In terms of biological role, endoribonuclease that initiates mRNA decay. The sequence is that of Ribonuclease Y from Mycoplasma mycoides.